The chain runs to 359 residues: Isopentenyl-diphosphate delta-isomerase (359 aa).

12–13 (RK) provides a ligand contact to substrate. FMN contacts are provided by residues S68, 69–71 (AMT), S99, and N128. 99–101 (SQR) serves as a coordination point for substrate. Position 162 (Q162) interacts with substrate. E163 is a binding site for Mg(2+). Residues K194, T224, 277-279 (GIR), and 298-299 (AL) each bind FMN.

The protein belongs to the IPP isomerase type 2 family. As to quaternary structure, homooctamer. Dimer of tetramers. FMN is required as a cofactor. NADPH serves as cofactor. Requires Mg(2+) as cofactor.

Its subcellular location is the cytoplasm. The enzyme catalyses isopentenyl diphosphate = dimethylallyl diphosphate. Its function is as follows. Involved in the biosynthesis of isoprenoids. Catalyzes the 1,3-allylic rearrangement of the homoallylic substrate isopentenyl (IPP) to its allylic isomer, dimethylallyl diphosphate (DMAPP). In Methanoregula boonei (strain DSM 21154 / JCM 14090 / 6A8), this protein is Isopentenyl-diphosphate delta-isomerase.